We begin with the raw amino-acid sequence, 547 residues long: Chaperonin GroEL (547 aa).

ATP-binding positions include 30–33 (TLGP), lysine 51, 87–91 (DGTTT), glycine 415, 479–481 (NAA), and aspartate 495.

The protein belongs to the chaperonin (HSP60) family. Forms a cylinder of 14 subunits composed of two heptameric rings stacked back-to-back. Interacts with the co-chaperonin GroES.

The protein resides in the cytoplasm. It carries out the reaction ATP + H2O + a folded polypeptide = ADP + phosphate + an unfolded polypeptide.. Together with its co-chaperonin GroES, plays an essential role in assisting protein folding. The GroEL-GroES system forms a nano-cage that allows encapsulation of the non-native substrate proteins and provides a physical environment optimized to promote and accelerate protein folding. In Pseudomonas aeruginosa (strain UCBPP-PA14), this protein is Chaperonin GroEL.